The chain runs to 425 residues: Kynurenine/alpha-aminoadipate aminotransferase, mitochondrial (425 aa).

The N-terminal 29 residues, 1–29 (MNYSRFLTATSLARKTSPIRATVEIMSRA), are a transit peptide targeting the mitochondrion. R20 is a binding site for substrate. S40 is modified (phosphoserine). Positions 74 and 142 each coordinate substrate. K172 is subject to N6-succinyllysine. K179 is subject to N6-acetyllysine. The segment covering 179 to 188 (KPEDSKDPTK) has biased composition (basic and acidic residues). The disordered stretch occupies residues 179 to 208 (KPEDSKDPTKRTPKFLYTIPNGNNPTGNSL). Polar residues predominate over residues 198 to 208 (PNGNNPTGNSL). Residue N202 participates in substrate binding. K263 is subject to N6-(pyridoxal phosphate)lysine; alternate. K263 and K339 each carry N6-acetyllysine; alternate. Residues K263 and K339 each carry the N6-succinyllysine; alternate modification. At K351 the chain carries N6-acetyllysine. At K367 the chain carries N6-acetyllysine; alternate. At K367 the chain carries N6-succinyllysine; alternate. R399 provides a ligand contact to substrate. Position 422 is an N6-acetyllysine (K422).

Belongs to the class-I pyridoxal-phosphate-dependent aminotransferase family. As to quaternary structure, homodimer. It depends on pyridoxal 5'-phosphate as a cofactor. The N-terminus is blocked.

The protein resides in the mitochondrion. It catalyses the reaction L-kynurenine + 2-oxoglutarate = kynurenate + L-glutamate + H2O. It carries out the reaction L-2-aminoadipate + 2-oxoglutarate = 2-oxoadipate + L-glutamate. The catalysed reaction is glycine + 2-oxoglutarate = glyoxylate + L-glutamate. The enzyme catalyses L-kynurenine + glyoxylate = kynurenate + glycine + H2O. It catalyses the reaction 3-hydroxy-L-kynurenine + glyoxylate = xanthurenate + glycine + H2O. It carries out the reaction 2-oxohexanoate + L-kynurenine = L-2-aminohexanoate + kynurenate + H2O. The catalysed reaction is 3-phenylpyruvate + L-kynurenine = kynurenate + L-phenylalanine + H2O. The enzyme catalyses 4-methylsulfanyl-2-oxobutanoate + L-kynurenine = kynurenate + L-methionine + H2O. It catalyses the reaction 2-oxo-3-sulfanylpropanoate + L-kynurenine = kynurenate + L-cysteine + H2O. It carries out the reaction indole-3-pyruvate + L-kynurenine = kynurenate + L-tryptophan + H2O. The catalysed reaction is 2-oxopentanoate + L-kynurenine = L-2-aminopentanoate + kynurenate + H2O. The enzyme catalyses 4-methyl-2-oxopentanoate + L-kynurenine = kynurenate + L-leucine + H2O. It catalyses the reaction glyoxylate + L-methionine = 4-methylsulfanyl-2-oxobutanoate + glycine. It carries out the reaction L-2-aminoadipate + glyoxylate = 2-oxoadipate + glycine. The catalysed reaction is L-tyrosine + glyoxylate = 3-(4-hydroxyphenyl)pyruvate + glycine. The enzyme catalyses glyoxylate + L-phenylalanine = 3-phenylpyruvate + glycine. It catalyses the reaction L-tryptophan + glyoxylate = indole-3-pyruvate + glycine. It carries out the reaction L-leucine + glyoxylate = 4-methyl-2-oxopentanoate + glycine. The catalysed reaction is 2-oxobutanoate + L-kynurenine = (2S)-2-aminobutanoate + kynurenate + H2O. The enzyme catalyses 2-oxoadipate + L-kynurenine = L-2-aminoadipate + kynurenate + H2O. It catalyses the reaction 2-oxoadipate + L-kynurenine = 4-(2-aminophenyl)-2,4-dioxobutanoate + L-2-aminoadipate. It functions in the pathway amino-acid degradation; L-lysine degradation via saccharopine pathway; glutaryl-CoA from L-lysine: step 4/6. Transaminase with broad substrate specificity. Has transaminase activity towards aminoadipate, kynurenine, methionine and glutamate. Shows activity also towards tryptophan, aspartate and hydroxykynurenine. Accepts a variety of oxo-acids as amino-group acceptors, with a preference for 2-oxoglutarate, 2-oxocaproic acid, phenylpyruvate and alpha-oxo-gamma-methiol butyric acid. Can also use glyoxylate as amino-group acceptor (in vitro). The sequence is that of Kynurenine/alpha-aminoadipate aminotransferase, mitochondrial from Rattus norvegicus (Rat).